Here is a 139-residue protein sequence, read N- to C-terminus: Arsenate reductase (139 aa).

Residues C10, C82, and C89 each act as nucleophile in the active site. 2 cysteine pairs are disulfide-bonded: C10–C82 and C82–C89.

It belongs to the low molecular weight phosphotyrosine protein phosphatase family. Thioredoxin-coupled ArsC subfamily.

Its subcellular location is the cytoplasm. It carries out the reaction arsenate + [thioredoxin]-dithiol + H(+) = arsenite + [thioredoxin]-disulfide + H2O. Its function is as follows. Catalyzes the reduction of arsenate [As(V)] to arsenite [As(III)]. The chain is Arsenate reductase from Halalkalibacterium halodurans (strain ATCC BAA-125 / DSM 18197 / FERM 7344 / JCM 9153 / C-125) (Bacillus halodurans).